Here is a 210-residue protein sequence, read N- to C-terminus: Protein Nef (210 aa).

The interval 1–37 is disordered; the sequence is MGGKWSKRSMGGWSAIRERMRRAEPRAEPAADGVGAV. G2 carries the N-myristoyl glycine; by host lipid modification. Phosphoserine; by host is present on S6. A compositionally biased stretch (basic and acidic residues) spans 16-29; sequence IRERMRRAEPRAEP. The interval 66-69 is acidic; interacts with host PACS1 and PACS2; stabilizes the interaction of NEF/MHC-I with host AP1M1; necessary for MHC-I internalization; the sequence is EEEE. The tract at residues 73-82 is SH3-binding; interaction with Src family tyrosine kinases; the sequence is PVRPQVPLRP. A PxxP; stabilizes the interaction of NEF/MHC-I with host AP1M1; necessary for MHC-I internalization motif is present at residues 76-79; sequence PQVP. The tract at residues 112-128 is mediates dimerization, Nef-PTE1 interaction; sequence EILDLWIYHTQGYFPDW. A binding to ATP6V1H region spans residues 152 to 184; it reads VEPEKVEEANEGENNSLLHPMSLHGMEDAEKEV. Positions 168 to 169 match the Dileucine internalization motif; necessary for CD4 internalization motif; sequence LL. The short motif at 178 to 179 is the Diacidic; necessary for CD4 internalization element; the sequence is ED.

It belongs to the lentivirus primate group Nef protein family. As to quaternary structure, monomer; cytosolic form. Homodimer; membrane bound form. Interacts with Nef associated p21-activated kinase (PAK2); this interaction activates PAK2. Associates with the Nef-MHC-I-AP1 complex; this complex is required for MHC-I internalization. Interacts (via C-terminus) with host PI3-kinase. Interacts with host PACS1; this interaction seems to be weak. Interacts with host PACS2. Interacts with host LCK and MAPK3; these interactions inhibit the kinase activity of the latter. Interacts with host ATP6V1H; this interaction may play a role in CD4 endocytosis. Associates with the CD4-Nef-AP2 complex; this complex is required for CD4 internalization. Interacts with host AP2 subunit alpha and AP2 subunit sigma2. Interacts with TCR-zeta chain; this interaction up-regulates the Fas ligand (FasL) surface expression. Interacts with host HCK, LYN, and SRC; these interactions activate the Src family kinases. Interacts with MAP3K5; this interaction inhibits the Fas and TNFR-mediated death signals. Interacts with beta-COP and PTE1. Interacts with human RACK1; this increases Nef phosphorylation by PKC. Interacts with TP53; this interaction decreases the half-life of TP53, protecting the infected cell against p53-mediated apoptosis. Post-translationally, the virion-associated Nef proteins are cleaved by the viral protease to release the soluble C-terminal core protein. Nef is probably cleaved concomitantly with viral structural proteins on maturation of virus particles. In terms of processing, myristoylated. Phosphorylated on serine residues, probably by host PKCdelta and theta.

The protein resides in the host cell membrane. The protein localises to the virion. It localises to the secreted. It is found in the host Golgi apparatus membrane. Its function is as follows. Factor of infectivity and pathogenicity, required for optimal virus replication. Alters numerous pathways of T-lymphocyte function and down-regulates immunity surface molecules in order to evade host defense and increase viral infectivity. Alters the functionality of other immunity cells, like dendritic cells, monocytes/macrophages and NK cells. Functionally, in infected CD4(+) T-lymphocytes, down-regulates the surface MHC-I, mature MHC-II, CD4, CD28, CCR5 and CXCR4 molecules. Mediates internalization and degradation of host CD4 through the interaction of with the cytoplasmic tail of CD4, the recruitment of AP-2 (clathrin adapter protein complex 2), internalization through clathrin coated pits, and subsequent transport to endosomes and lysosomes for degradation. Diverts host MHC-I molecules to the trans-Golgi network-associated endosomal compartments by an endocytic pathway to finally target them for degradation. MHC-I down-regulation may involve AP-1 (clathrin adapter protein complex 1) or possibly Src family kinase-ZAP70/Syk-PI3K cascade recruited by PACS2. In consequence infected cells are masked for immune recognition by cytotoxic T-lymphocytes. Decreasing the number of immune receptors also prevents reinfection by more HIV particles (superinfection). Down-regulates host SERINC3 and SERINC5 thereby excluding these proteins from the viral particles. Virion infectivity is drastically higher when SERINC3 or SERINC5 are excluded from the viral envelope, because these host antiviral proteins impair the membrane fusion event necessary for subsequent virion penetration. In terms of biological role, bypasses host T-cell signaling by inducing a transcriptional program nearly identical to that of anti-CD3 cell activation. Interaction with TCR-zeta chain up-regulates the Fas ligand (FasL). Increasing surface FasL molecules and decreasing surface MHC-I molecules on infected CD4(+) cells send attacking cytotoxic CD8+ T-lymphocytes into apoptosis. Plays a role in optimizing the host cell environment for viral replication without causing cell death by apoptosis. Protects the infected cells from apoptosis in order to keep them alive until the next virus generation is ready to strike. Inhibits the Fas and TNFR-mediated death signals by blocking MAP3K5/ASK1. Decreases the half-life of TP53, protecting the infected cell against p53-mediated apoptosis. Inhibits the apoptotic signals regulated by the Bcl-2 family proteins through the formation of a Nef/PI3-kinase/PAK2 complex that leads to activation of PAK2 and induces phosphorylation of host BAD. Its function is as follows. Extracellular Nef protein targets CD4(+) T-lymphocytes for apoptosis by interacting with CXCR4 surface receptors. This chain is Protein Nef, found in Human immunodeficiency virus type 1 group M subtype B (isolate ARV2/SF2) (HIV-1).